Consider the following 114-residue polypeptide: Small ribosomal subunit protein bS16 (114 aa).

The tract at residues 87–114 is disordered; that stretch reads AFREQPVQSAPKKKAQERAAERAKAAEA. Residues 100–114 are compositionally biased toward basic and acidic residues; sequence KAQERAAERAKAAEA.

This sequence belongs to the bacterial ribosomal protein bS16 family.

This chain is Small ribosomal subunit protein bS16, found in Acidiphilium cryptum (strain JF-5).